Consider the following 365-residue polypeptide: D-alanine--D-alanine ligase (365 aa).

Positions 135-345 (KLLLKSFNIP…YESLVDNLVS (211 aa)) constitute an ATP-grasp domain. 168-223 (KQSLNYPVIVKPAMLGSSIGISIAYNDTQIEKCIEEAFEYDLTVVVEKFMKVREIE) is a binding site for ATP. Mg(2+) contacts are provided by Asp-298, Glu-312, and Asn-314.

This sequence belongs to the D-alanine--D-alanine ligase family. The cofactor is Mg(2+). Requires Mn(2+) as cofactor.

It is found in the cytoplasm. It carries out the reaction 2 D-alanine + ATP = D-alanyl-D-alanine + ADP + phosphate + H(+). It functions in the pathway cell wall biogenesis; peptidoglycan biosynthesis. Its function is as follows. Cell wall formation. This Borrelia hermsii (strain HS1 / DAH) protein is D-alanine--D-alanine ligase.